The sequence spans 377 residues: Serine/threonine-protein phosphatase PP2A-2 catalytic subunit (377 aa).

Residues 1–66 (MDMEIDDPMH…SGIADHKSSK (66 aa)) are disordered. Positions 28–40 (DDGKNNTKARSND) are enriched in basic and acidic residues. S38 carries the post-translational modification Phosphoserine. T43 is modified (phosphothreonine). Mn(2+) is bound by residues D125, H127, D153, and N185. The active-site Proton donor is H186. Positions 235 and 309 each coordinate Mn(2+). Residue L377 is modified to Leucine methyl ester.

Belongs to the PPP phosphatase family. PP-2A subfamily. As to quaternary structure, inactivated in a complex with phosphatase methylesterase PPE1 (PP2Ai). Interacts with phosphatase 2A activator RRD2, which can reactivate PP2Ai by dissociating the catalytic subunit from the complex. Interacts with TAP42. Mn(2+) serves as cofactor. Reversibly methyl esterified on Leu-377 by leucine carboxyl methyltransferase 1 (PPM1) and protein phosphatase methylesterase 1 (PPE1). Carboxyl methylation influences the affinity of the catalytic subunit for the different regulatory subunits, thereby modulating the PP2A holoenzyme's substrate specificity, enzyme activity and cellular localization.

The enzyme catalyses O-phospho-L-seryl-[protein] + H2O = L-seryl-[protein] + phosphate. The catalysed reaction is O-phospho-L-threonyl-[protein] + H2O = L-threonyl-[protein] + phosphate. Exact function not known, phosphatase 2A performs an essential cellular function. The chain is Serine/threonine-protein phosphatase PP2A-2 catalytic subunit (PPH22) from Saccharomyces cerevisiae (strain ATCC 204508 / S288c) (Baker's yeast).